The sequence spans 185 residues: Ribosome-recycling factor (185 aa).

Belongs to the RRF family.

It is found in the cytoplasm. In terms of biological role, responsible for the release of ribosomes from messenger RNA at the termination of protein biosynthesis. May increase the efficiency of translation by recycling ribosomes from one round of translation to another. The polypeptide is Ribosome-recycling factor (Hydrogenovibrio crunogenus (strain DSM 25203 / XCL-2) (Thiomicrospira crunogena)).